A 965-amino-acid polypeptide reads, in one-letter code: Phosphoenolpyruvate carboxylase 1 (965 aa).

Ser-11 is subject to Phosphoserine. His-172 is an active-site residue. Residues Trp-283, Arg-450, and Asp-597 each contribute to the D-glucose 6-phosphate site. The active site involves Lys-600. Arg-635 serves as a coordination point for D-glucose 6-phosphate. The active site involves Arg-641. Residue Arg-641 participates in L-aspartate binding. Thr-665 is a D-glucose 6-phosphate binding site. Gln-673 serves as a coordination point for L-aspartate. Residues Arg-753 and Arg-767–Ile-769 each bind D-glucose 6-phosphate. L-aspartate contacts are provided by Lys-829, Arg-888, and Asn-963.

The protein belongs to the PEPCase type 1 family. Homotetramer. It depends on Mg(2+) as a cofactor. In terms of tissue distribution, expressed in roots and stems and at low levels in leaves. Preferentially expressed in the phloem and in root tips.

The protein localises to the cytoplasm. It catalyses the reaction oxaloacetate + phosphate = phosphoenolpyruvate + hydrogencarbonate. Activated by the allosteric regulator glucose-6-phosphate. Inhibited by malate and aspartate. Up regulated by light-reversible phosphorylation. Its function is as follows. Through the carboxylation of phosphoenolpyruvate (PEP) it forms oxaloacetate, a four-carbon dicarboxylic acid source for the tricarboxylic acid cycle. May be involved in phloem loading with sucrose and in anions and cations uptake and amino acid biosynthesis in roots. This Flaveria trinervia (Clustered yellowtops) protein is Phosphoenolpyruvate carboxylase 1.